Reading from the N-terminus, the 536-residue chain is G-protein coupled receptor Mth2 (536 aa).

Residues 1–210 are Extracellular-facing; sequence MAERDHYHTI…DDNSTVKIIN (210 aa). 5 cysteine pairs are disulfide-bonded: Cys17–Cys71, Cys73–Cys78, Cys82–Cys177, Cys83–Cys96, and Cys138–Cys197. N-linked (GlcNAc...) asparagine glycans are attached at residues Asn24 and Asn33. 6 N-linked (GlcNAc...) asparagine glycosylation sites follow: Asn103, Asn113, Asn118, Asn159, Asn184, and Asn203. Residues 211 to 231 form a helical membrane-spanning segment; the sequence is AYAMMFSIPFMMLTIAVYLLI. Residues 232 to 241 are Cytoplasmic-facing; the sequence is PELRNQHGKS. A helical membrane pass occupies residues 242–262; the sequence is LVCYLVGLTVGYTSLCYVQLY. At 263–273 the chain is on the extracellular side; the sequence is QVDATGDACKV. Residues 274-294 form a helical membrane-spanning segment; sequence FGYTAYFFFMGAYMWLSVISF. Over 295–314 the chain is Cytoplasmic; the sequence is DLWHNFRGTRGINRFQEKKR. Residues 315–335 traverse the membrane as a helical segment; sequence FLFYSLYSWGIAVVFLAFTYI. Residues 336–365 are Extracellular-facing; that stretch reads AQELTNLPAYLKPGIGDGVYCWLDMSNWAA. Residues 366–386 form a helical membrane-spanning segment; the sequence is MIYFYGPILVIVVANTIMFIM. The Cytoplasmic portion of the chain corresponds to 387–417; sequence TAIKIHGVQREMARIIASENSTKNLRTEKDK. The helical transmembrane segment at 418-438 threads the bilayer; the sequence is FGLFLRLFLIMGITWLTELIS. At 439–449 the chain is on the extracellular side; it reads YFVGSDKGWSK. A helical membrane pass occupies residues 450-470; sequence LFYISDLANAMQGFLIFMLFV. Over 471 to 536 the chain is Cytoplasmic; sequence MKKKVKHLIT…VDPQKTTIFR (66 aa). The interval 487-506 is disordered; the sequence is RDGSNQRQSQYSTKTTSSSV. The segment covering 492–505 has biased composition (low complexity); the sequence is QRQSQYSTKTTSSS.

The protein belongs to the G-protein coupled receptor 2 family. Mth subfamily. Homodimer.

The protein localises to the cell membrane. Involved in biological aging and stress response. Essential for adult survival. In Drosophila yakuba (Fruit fly), this protein is G-protein coupled receptor Mth2 (mth2).